The primary structure comprises 313 residues: 4-diphosphocytidyl-2-C-methyl-D-erythritol kinase (313 aa).

Residue lysine 11 is part of the active site. 99–109 (PVAAGLAGGST) provides a ligand contact to ATP. Residue aspartate 141 is part of the active site.

Belongs to the GHMP kinase family. IspE subfamily.

It carries out the reaction 4-CDP-2-C-methyl-D-erythritol + ATP = 4-CDP-2-C-methyl-D-erythritol 2-phosphate + ADP + H(+). It participates in isoprenoid biosynthesis; isopentenyl diphosphate biosynthesis via DXP pathway; isopentenyl diphosphate from 1-deoxy-D-xylulose 5-phosphate: step 3/6. Catalyzes the phosphorylation of the position 2 hydroxy group of 4-diphosphocytidyl-2C-methyl-D-erythritol. This chain is 4-diphosphocytidyl-2-C-methyl-D-erythritol kinase, found in Microcystis aeruginosa (strain NIES-843 / IAM M-2473).